The sequence spans 347 residues: MFLVLVVTEELREFLARARNGTGRLIQVLIRDEQLVLGAYREPRHSWDKDYDPVLLPLLDPLEPCYILYRLDSKNAQGYEWLFISWSPDQSPVRQKMLYAATRATVKKEFGGGHVKDEMFGTVEEDICLQGYLRHITSCSAPAPLTVAEQELQRIKITEVKAEISVDPKHQTLQGLAFPLQAEAKRALKQLAERRINYIQLKLDTEKETIDLVHTSPTDIRDLPCRIPLDTPRYHFFLYKHSHEGDYLESVVFIYSMPGYSCSIKERMLYSSCKSRLLDEVERDFHLEVAKKLEIDSGEELTEEYLYDEVHPKQHAHKQAFAKPRGPAGKRGNKRLIKGGGENGGNS.

ADF-H domains are found at residues 3–137 and 175–311; these read LVLV…RHIT and GLAF…DEVH. The tract at residues 314 to 347 is disordered; that stretch reads QHAHKQAFAKPRGPAGKRGNKRLIKGGGENGGNS. Gly residues predominate over residues 338–347; that stretch reads KGGGENGGNS.

This sequence belongs to the actin-binding proteins ADF family. Twinfilin subfamily. In terms of assembly, interacts with G-actin; ADP-actin form and capping protein (CP).

Its subcellular location is the cytoplasm. It localises to the cytoskeleton. The protein localises to the perinuclear region. Functionally, actin-binding protein involved in motile and morphological processes. Inhibits actin polymerization, likely by sequestering G-actin. The sequence is that of Twinfilin-2 (twf2) from Danio rerio (Zebrafish).